We begin with the raw amino-acid sequence, 1000 residues long: C-module-binding factor A (1000 aa).

One can recognise a JmjC domain in the interval 113 to 280 (PREWQEYLSH…ISYFSSLPHT (168 aa)). Residues 489–544 (KIKCHRCEKRFKKFSIIFCTNCNARFCEQCVVNTFGQNFQVLMKRNEWECFCCKGL) form a PHD-type; atypical zinc finger. Residues 492-542 (CHRCEKRFKKFSIIFCTNCNARFCEQCVVNTFGQNFQVLMKRNEWECFCCK) form an RING-type; degenerate zinc finger. Disordered stretches follow at residues 561 to 647 (RILN…SSYS) and 660 to 818 (SYGS…KNLK). Low complexity-rich tracts occupy residues 574-647 (NNNN…SSYS), 660-683 (SYGS…NNNN), 700-710 (SSSSGSGSSNS), 732-751 (NNNN…NNHH), and 760-789 (NNNN…STST). Residues 805 to 818 (DNDKPKGRPPKNLK) are compositionally biased toward basic and acidic residues. The a.T hook DNA-binding region spans 810–818 (KGRPPKNLK).

In terms of assembly, monomer.

It localises to the nucleus. In terms of biological role, transcriptional regulator involved in phagocytosis and pinocytosis. Both activates and represses transcription. Regulates expression of acaA, carA, pkaC, csaA, cotB and lagC. Promotes amplification of the tRNA gene-associated retrotransposon TRE5-A, a mobile genetic element formerly called as Dictyostelium repetitive element (DRE). Suppresses agnC and agnE encoding argonaute proteins which are part of a RNA interference pathway controlling TRE5-A amplification. Required for amplification of both sense and antisense RNA transcripts, but does not activate their promoters found in A-module and C-module of the TRE5-A, respectively. Nevertheless, binds to distinct DNA sequences containing A and T stretches within the C-module in vitro. The protein is C-module-binding factor A of Dictyostelium discoideum (Social amoeba).